The chain runs to 310 residues: Methionyl-tRNA formyltransferase (310 aa).

110-113 (SLLP) contributes to the (6S)-5,6,7,8-tetrahydrofolate binding site.

The protein belongs to the Fmt family.

The catalysed reaction is L-methionyl-tRNA(fMet) + (6R)-10-formyltetrahydrofolate = N-formyl-L-methionyl-tRNA(fMet) + (6S)-5,6,7,8-tetrahydrofolate + H(+). Functionally, attaches a formyl group to the free amino group of methionyl-tRNA(fMet). The formyl group appears to play a dual role in the initiator identity of N-formylmethionyl-tRNA by promoting its recognition by IF2 and preventing the misappropriation of this tRNA by the elongation apparatus. The polypeptide is Methionyl-tRNA formyltransferase (Streptomyces avermitilis (strain ATCC 31267 / DSM 46492 / JCM 5070 / NBRC 14893 / NCIMB 12804 / NRRL 8165 / MA-4680)).